The sequence spans 320 residues: Ferrochelatase (320 aa).

Fe cation-binding residues include His194 and Glu275.

This sequence belongs to the ferrochelatase family. Monomer.

It localises to the cytoplasm. It carries out the reaction heme b + 2 H(+) = protoporphyrin IX + Fe(2+). The protein operates within porphyrin-containing compound metabolism; protoheme biosynthesis; protoheme from protoporphyrin-IX: step 1/1. Its function is as follows. Catalyzes the ferrous insertion into protoporphyrin IX. The polypeptide is Ferrochelatase (Escherichia coli O45:K1 (strain S88 / ExPEC)).